A 299-amino-acid polypeptide reads, in one-letter code: 5,10-dihydrophenazine-1-carboxylate 9-dimethylallyltransferase (299 aa).

It belongs to the aromatic prenyltransferase family.

The catalysed reaction is 5,10-dihydrophenazine 1-carboxylate + dimethylallyl diphosphate = 5,10-dihydro-9-dimethylallylphenazine 1-carboxylate + diphosphate. It functions in the pathway antibiotic biosynthesis; phenazine biosynthesis. Does not require magnesium or any other divalent metal ions for activity. Functionally, involved in the biosynthesis of prenylated phenazines. Catalyzes the transfer of a dimethylallyl moiety to C-9 of 5,10-dihydrophenazine 1-carboxylate (dihydro-PCA). Specific for both dimethylallyl diphosphate and dihydro-PCA. The chain is 5,10-dihydrophenazine-1-carboxylate 9-dimethylallyltransferase from Streptomyces anulatus (Streptomyces chrysomallus).